The primary structure comprises 233 residues: 7-cyano-7-deazaguanine synthase (233 aa).

An ATP-binding site is contributed by Phe11–Leu21. Zn(2+) contacts are provided by Cys199, Cys214, Cys217, and Cys220.

The protein belongs to the QueC family. It depends on Zn(2+) as a cofactor.

It carries out the reaction 7-carboxy-7-deazaguanine + NH4(+) + ATP = 7-cyano-7-deazaguanine + ADP + phosphate + H2O + H(+). Its pathway is purine metabolism; 7-cyano-7-deazaguanine biosynthesis. Its function is as follows. Catalyzes the ATP-dependent conversion of 7-carboxy-7-deazaguanine (CDG) to 7-cyano-7-deazaguanine (preQ(0)). This is 7-cyano-7-deazaguanine synthase from Herminiimonas arsenicoxydans.